The chain runs to 1257 residues: uncharacterized protein (1257 aa).

The segment at 1-26 (MNFSNKPNKSRKKSNRKNKKSNKSNT) is disordered. Residues 8–22 (NKSRKKSNRKNKKSN) show a composition bias toward basic residues.

Its subcellular location is the virion. This is an uncharacterized protein from Acanthamoeba polyphaga mimivirus (APMV).